The chain runs to 212 residues: Pyridoxine/pyridoxamine 5'-phosphate oxidase (212 aa).

Substrate is bound by residues R7 to Y10 and K65. FMN-binding positions include R60–K65, F75–T76, R81, K82, and Q104. 3 residues coordinate substrate: Y122, R126, and S130. Residues Q139–S140 and W184 each bind FMN. R190–H192 contributes to the substrate binding site. R194 serves as a coordination point for FMN.

This sequence belongs to the pyridoxamine 5'-phosphate oxidase family. As to quaternary structure, homodimer. Requires FMN as cofactor.

The catalysed reaction is pyridoxamine 5'-phosphate + O2 + H2O = pyridoxal 5'-phosphate + H2O2 + NH4(+). It carries out the reaction pyridoxine 5'-phosphate + O2 = pyridoxal 5'-phosphate + H2O2. Its pathway is cofactor metabolism; pyridoxal 5'-phosphate salvage; pyridoxal 5'-phosphate from pyridoxamine 5'-phosphate: step 1/1. It participates in cofactor metabolism; pyridoxal 5'-phosphate salvage; pyridoxal 5'-phosphate from pyridoxine 5'-phosphate: step 1/1. Its function is as follows. Catalyzes the oxidation of either pyridoxine 5'-phosphate (PNP) or pyridoxamine 5'-phosphate (PMP) into pyridoxal 5'-phosphate (PLP). This chain is Pyridoxine/pyridoxamine 5'-phosphate oxidase, found in Alteromonas mediterranea (strain DSM 17117 / CIP 110805 / LMG 28347 / Deep ecotype).